A 402-amino-acid chain; its full sequence is Arginine deiminase (402 aa).

Cysteine 392 (amidino-cysteine intermediate) is an active-site residue.

Belongs to the arginine deiminase family.

It is found in the cytoplasm. The enzyme catalyses L-arginine + H2O = L-citrulline + NH4(+). It functions in the pathway amino-acid degradation; L-arginine degradation via ADI pathway; carbamoyl phosphate from L-arginine: step 1/2. The polypeptide is Arginine deiminase (arcA) (Mycobacterium bovis (strain ATCC BAA-935 / AF2122/97)).